The primary structure comprises 829 residues: Cadherin-16 (829 aa).

The signal sequence occupies residues 1–18 (MVPAWLWLLCFSVPQALV). Over 19-786 (EVSPTTLHVE…MKGMPTKLSA (768 aa)) the chain is Extracellular. Cadherin domains follow at residues 25–126 (LHVE…VPQF), 131–235 (YSAR…SIVE), 242–336 (EPVH…APVC), 341–449 (PPVS…APEF), 455–564 (GPVS…PPRL), and 569–665 (YEAD…APAL). Residues asparagine 517, asparagine 602, and asparagine 722 are each glycosylated (N-linked (GlcNAc...) asparagine). Positions 666-786 (PLAPMPSRHL…MKGMPTKLSA (121 aa)) are ectodomain G. The helical transmembrane segment at 787–807 (VGILVGTLAAIGFFLILIFTH) threads the bilayer. Residues 808 to 829 (LALARKKDLDAPADNVPLKAAA) are Cytoplasmic-facing.

In terms of tissue distribution, kidney specific. Limited to the basolateral membranes of renal tubular epithelial cells.

Its subcellular location is the cell membrane. Functionally, cadherins are calcium-dependent cell adhesion proteins. They preferentially interact with themselves in a homophilic manner in connecting cells; cadherins may thus contribute to the sorting of heterogeneous cell types. The sequence is that of Cadherin-16 (CDH16) from Oryctolagus cuniculus (Rabbit).